Reading from the N-terminus, the 719-residue chain is MDALVNSFEDLNTSHTTSRYRAKRHHARTKSSPGSIKRNQSIRRHSRTLSTHYDSSNPYQDASTSYAQLSMGRRTEGSSTKPRPKSYVEPSHTQTQAHYATDSHHPSHSRSHSQTGHGPRATFRHHHHRSKSHTNPRSRFELRPQSHHETYTYLPDDPSPQFDEPNFSWMEEAENQLSELQSKYKPEPMAASTSLSWQIPDESHHLTSVAVHESSPLIAVGSGGKENNLFVYETTQDKGLIHHQTISLPAIHGLKWLSPSQQVADLGNILATSHSNGLAHLVLLPDCYSSDPAEILKRFNHKHHVSIKDTLSTRIKHLELTTPAWRSSVSSSLATLYSQHLFLWDPSRGDTPVLTRKVKRAEAFSLSPFQDGQVAAACGKYTSLLDLRAKSGSVNLLAGNTNLCAYSPMNSNLLATAHSDVSGLQENCVRIWDSRHTAGPLHKLEGHTDQIRSLEWSKFNPCELHTSSNDGSLRLWNIGRQQETKARPSLEVYSGDLAAQWDEQKASAQWLPRSARQMQQRGLAFNVAPLNIQKKEKKEKKPALYSSSVIAKTPHAAVASASFMPTGSMHPSVVTVDSYGSLGIHSMPSATPYNTEPETPRTLTARMSVQSFASTDMSSDFTEADMSSASDTSPMTSPSMASAATFQSSYDSPVKACIPEARPATYETSVSSSFIPPLQIKKRVPSGPRPEGSHVRRPSRESRNMLPELDLDFDFGLTA.

Residues 1–144 (MDALVNSFED…NPRSRFELRP (144 aa)) form a disordered region. The segment covering 18–29 (SRYRAKRHHART) has biased composition (basic residues). Polar residues-rich tracts occupy residues 30–39 (KSSPGSIKRN) and 48–68 (TLST…SYAQ). Over residues 122 to 136 (TFRHHHHRSKSHTNP) the composition is skewed to basic residues. WD repeat units lie at residues 201–242 (DESH…GLIH), 246–294 (ISLP…DPAE), 310–354 (TLST…TPVL), 396–442 (LLAG…GPLH), and 446–486 (GHTD…ETKA). A disordered region spans residues 677–707 (PLQIKKRVPSGPRPEGSHVRRPSRESRNMLP). Over residues 691-703 (EGSHVRRPSRESR) the composition is skewed to basic and acidic residues.

This sequence belongs to the WD repeat DSE1 family.

In terms of biological role, involved in cell wall metabolism and required for the separation of the mother and daughter cells. This is Protein DSE1 (DSE1) from Yarrowia lipolytica (strain CLIB 122 / E 150) (Yeast).